The primary structure comprises 252 residues: Geranylgeranylglyceryl phosphate synthase (252 aa).

Mg(2+) contacts are provided by Asp-25 and Ser-54. Sn-glycerol 1-phosphate-binding positions include 174–180 (FMDAGSG), 205–206 (GG), and 227–228 (GN).

The protein belongs to the GGGP/HepGP synthase family. Group II subfamily. In terms of assembly, homohexamer. Mg(2+) is required as a cofactor.

It catalyses the reaction sn-glycerol 1-phosphate + (2E,6E,10E)-geranylgeranyl diphosphate = sn-3-O-(geranylgeranyl)glycerol 1-phosphate + diphosphate. Functionally, prenyltransferase that catalyzes the transfer of the geranylgeranyl moiety of geranylgeranyl diphosphate (GGPP) to the C3 hydroxyl of sn-glycerol-1-phosphate (G1P). The sequence is that of Geranylgeranylglyceryl phosphate synthase from Chitinophaga pinensis (strain ATCC 43595 / DSM 2588 / LMG 13176 / NBRC 15968 / NCIMB 11800 / UQM 2034).